We begin with the raw amino-acid sequence, 187 residues long: BCL2/adenovirus E1B 19 kDa protein-interacting protein 3 (187 aa).

The disordered stretch occupies residues Leu-42–Thr-86. A phosphoserine mark is found at Ser-48, Ser-60, Ser-77, Ser-79, Ser-85, and Ser-88. Residues Arg-50–Arg-63 are compositionally biased toward low complexity. Over residues Asn-71–Gly-81 the composition is skewed to basic and acidic residues. The BH3 signature appears at Ile-93–Glu-118. The helical transmembrane segment at Val-157 to Gly-177 threads the bilayer.

Belongs to the NIP3 family. As to quaternary structure, homodimer. Binds to BCL2. Interacts with BNIP3L and ACAA2. Interacts (via BH3 domain) with SPATA18 (via coiled-coil domains). Interacts with BOK; promotes BOK oligomerization. Interacts with PPTC7; this interaction promotes BNIP3 degradation.

The protein localises to the mitochondrion. It localises to the mitochondrion outer membrane. Apoptosis-inducing protein that can overcome BCL2 suppression. May play a role in repartitioning calcium between the two major intracellular calcium stores in association with BCL2. Involved in mitochondrial quality control via its interaction with SPATA18/MIEAP: in response to mitochondrial damage, participates in mitochondrial protein catabolic process (also named MALM) leading to the degradation of damaged proteins inside mitochondria. The physical interaction of SPATA18/MIEAP, BNIP3 and BNIP3L/NIX at the mitochondrial outer membrane may play a critical role in the translocation of lysosomal proteins from the cytoplasm to the mitochondrial matrix. The physical interaction of SPATA18/MIEAP, BNIP3 and BNIP3L/NIX at the mitochondrial outer membrane regulates the opening of a pore in the mitochondrial double membrane in order to mediate the translocation of lysosomal proteins from the cytoplasm to the mitochondrial matrix. Plays an important role in the calprotectin (S100A8/A9)-induced cell death pathway. This Mus musculus (Mouse) protein is BCL2/adenovirus E1B 19 kDa protein-interacting protein 3.